The following is a 957-amino-acid chain: Dystrophin-related protein 2 (957 aa).

2 Spectrin repeats span residues 102–179 (DHSG…EELE) and 231–337 (EHLL…QLQD). A WW domain is found at 358 to 383 (WERAISPNKVPYYINHQAQTTCWDHP). The segment at 605–661 (KHQTKCSICRQCPIKGFRYRSLKQFNVDICQTCFLTGKASKGNKLHYPIMEYYTPTT) adopts a ZZ-type; degenerate zinc-finger fold. 4 residues coordinate Zn(2+): Cys610, Cys613, Cys634, and Cys637. At Ser748 the chain carries Phosphoserine. The segment covering 877-894 (PPTESDGNGSAGSSLASS) has biased composition (low complexity). Residues 877 to 923 (PPTESDGNGSAGSSLASSPRQSEGSHPREKGQTTPDTEAADDVGSKS) are disordered. Residue Thr910 is modified to Phosphothreonine.

As to quaternary structure, interacts with PRX; this enhances phosphorylation. Identified in a dystroglycan complex that contains at least PRX, DRP2, UTRN, DMD and DAG1. Detected in trigeminal nerve Schwann cells. Detected in brain cortex and hippocampus. Detected in brain membrane fractions and highly enriched in the postsynaptic density (at protein level).

The protein localises to the postsynaptic density. Its subcellular location is the cell projection. It is found in the dendrite. The protein resides in the perikaryon. It localises to the cell membrane. In terms of biological role, required for normal myelination and for normal organization of the cytoplasm and the formation of Cajal bands in myelinating Schwann cells. Required for normal PRX location at appositions between the abaxonal surface of the myelin sheath and the Schwann cell plasma membrane. Possibly involved in membrane-cytoskeleton interactions of the central nervous system. In Rattus norvegicus (Rat), this protein is Dystrophin-related protein 2 (Drp2).